Consider the following 30-residue polypeptide: Conotoxin CcTx (30 aa).

At P2 the chain carries 4-hydroxyproline. O-linked (HexNAc...) serine glycosylation is present at S7. 3 disulfide bridges follow: C12–C21, C13–C26, and C24–C30. 4-hydroxyproline occurs at positions 17 and 22.

O-glycosylated at Ser-7 by a core type 9 glycan, containing both D- and L-galactose units (alpha-L-Galp-(1-&gt;4)-alpha-D- GlcpNAc-(1-&gt;6)-[alpha-L-Galp-(1-&gt;2)-bets-D-Galp-(1-&gt;3)-]alpha-D-GalpNAc-(1-&gt;O)). Expressed by the venom duct.

The protein localises to the secreted. In terms of biological role, may specifically activate neuronal voltage-gated sodium channels (Nav) at the resting membrane potential. Causes a marked contraction and extension of the caudal and dorsal fins in fish and noticeable spontaneous contractions of isolated frog neuromuscular preparations. In Conus consors (Singed cone), this protein is Conotoxin CcTx.